A 352-amino-acid chain; its full sequence is Inhibin beta C chain (352 aa).

The first 18 residues, 1-18 (MASSLLLALLFLTPTTVV), serve as a signal peptide directing secretion. Residues 19–236 (NPKTEGPCPA…VEGKHRVRRR (218 aa)) constitute a propeptide that is removed on maturation. N-linked (GlcNAc...) asparagine glycans are attached at residues Asn111, Asn143, Asn161, and Asn173. 4 disulfide bridges follow: Cys240–Cys248, Cys247–Cys317, Cys276–Cys349, and Cys280–Cys351.

The protein belongs to the TGF-beta family. In terms of assembly, homodimeric or heterodimeric through association with alpha and beta subunits, linked by one or more disulfide bonds. Inhibins are heterodimers of one alpha and one beta subunit. Activins are homo- or heterodimers of beta subunits only. As to expression, mainly expressed in the adult liver.

It is found in the secreted. Functionally, inhibins and activins inhibit and activate, respectively, the secretion of follitropin by the pituitary gland. Inhibins/activins are involved in regulating a number of diverse functions such as hypothalamic and pituitary hormone secretion, gonadal hormone secretion, germ cell development and maturation, erythroid differentiation, insulin secretion, nerve cell survival, embryonic axial development or bone growth, depending on their subunit composition. Inhibins appear to oppose the functions of activins. The protein is Inhibin beta C chain (Inhbc) of Mus musculus (Mouse).